The sequence spans 864 residues: Leucine--tRNA ligase (864 aa).

Residues 42-52 carry the 'HIGH' region motif; sequence PYPSGKLHMGH. The short motif at 624–628 is the 'KMSKS' region element; it reads KMSKS. Lys-627 serves as a coordination point for ATP.

Belongs to the class-I aminoacyl-tRNA synthetase family.

Its subcellular location is the cytoplasm. The enzyme catalyses tRNA(Leu) + L-leucine + ATP = L-leucyl-tRNA(Leu) + AMP + diphosphate. This Burkholderia pseudomallei (strain 1106a) protein is Leucine--tRNA ligase.